We begin with the raw amino-acid sequence, 366 residues long: Phospho-N-acetylmuramoyl-pentapeptide-transferase (366 aa).

10 helical membrane passes run 27–47, 76–96, 101–121, 136–156, 176–196, 205–225, 241–261, 264–284, 285–305, and 343–363; these read GAAITSLVLCWLLGRPMISLL, PTMGGLLILLAVSLSCLIWVI, FFWLSLLSMLFMGGIGFWDDF, IKLLAQAIVGVVVGIVLLADP, IDIGWMAIPFFILVVMGSSNA, GLAAGCTIGVAFVYAVFSYIS, GAGELTIFCSALIGACMGFLW, CYPAAVFMGDTGSLAIGSALG, VVAIILGQELLLVIAGGIFVI, and AVTVRFWILSLLFGLLALSSL.

This sequence belongs to the glycosyltransferase 4 family. MraY subfamily. Requires Mg(2+) as cofactor.

The protein resides in the cell inner membrane. The catalysed reaction is UDP-N-acetyl-alpha-D-muramoyl-L-alanyl-gamma-D-glutamyl-meso-2,6-diaminopimeloyl-D-alanyl-D-alanine + di-trans,octa-cis-undecaprenyl phosphate = di-trans,octa-cis-undecaprenyl diphospho-N-acetyl-alpha-D-muramoyl-L-alanyl-D-glutamyl-meso-2,6-diaminopimeloyl-D-alanyl-D-alanine + UMP. The protein operates within cell wall biogenesis; peptidoglycan biosynthesis. Its function is as follows. Catalyzes the initial step of the lipid cycle reactions in the biosynthesis of the cell wall peptidoglycan: transfers peptidoglycan precursor phospho-MurNAc-pentapeptide from UDP-MurNAc-pentapeptide onto the lipid carrier undecaprenyl phosphate, yielding undecaprenyl-pyrophosphoryl-MurNAc-pentapeptide, known as lipid I. This chain is Phospho-N-acetylmuramoyl-pentapeptide-transferase, found in Methylacidiphilum infernorum (isolate V4) (Methylokorus infernorum (strain V4)).